The primary structure comprises 453 residues: Nuclear distribution protein nudF-2 (453 aa).

The 33-residue stretch at 9–41 (QADELHRALIAYLTAANLPNTAAALREELNLSE) folds into the LisH domain. Residues 62–88 (SVVRLQKKIMDLESRNHILQSELDNAT) are a coiled coil. The interval 84–107 (LDNATPTSRQNKDPVAWLPRAPPR) is disordered. WD repeat units lie at residues 112–153 (SHRD…RTIK), 155–195 (HTKA…KNIR), 199–239 (GHDH…CVKT), 242–281 (GHAE…PEPK), 286–345 (GHEH…IKTL), 347–386 (GHDN…KCVK), and 391–449 (AHGH…LNVR).

Belongs to the WD repeat LIS1/nudF family. As to quaternary structure, self-associates. Interacts with ro-11/nde1 and dynein.

The protein localises to the cytoplasm. The protein resides in the cytoskeleton. It localises to the spindle pole. Its function is as follows. Positively regulates the activity of the minus-end directed microtubule motor protein dynein. May enhance dynein-mediated microtubule sliding by targeting dynein to the microtubule plus end. Required for nuclear migration during vegetative growth as well as development. Required for retrograde early endosome (EE) transport from the hyphal tip. Required for localization of dynein to the mitotic spindle poles. Recruits additional proteins to the dynein complex at SPBs. The polypeptide is Nuclear distribution protein nudF-2 (nmp-1) (Neurospora crassa (strain ATCC 24698 / 74-OR23-1A / CBS 708.71 / DSM 1257 / FGSC 987)).